Consider the following 419-residue polypeptide: CinA-like protein (419 aa).

It belongs to the CinA family.

This is CinA-like protein from Leptospira borgpetersenii serovar Hardjo-bovis (strain JB197).